Reading from the N-terminus, the 341-residue chain is Probable sulfurtransferase (341 aa).

Positions 40, 42, 58, and 61 each coordinate Zn(2+). Position 88 (Gly-88) interacts with ATP. Positions 176 and 179 each coordinate [4Fe-4S] cluster. Arg-183 and Gly-202 together coordinate ATP. Cys-267 lines the [4Fe-4S] cluster pocket. Residues Cys-316, Cys-319, Cys-328, and Cys-331 each contribute to the Zn(2+) site.

This sequence belongs to the TtcA family. [4Fe-4S] cluster serves as cofactor. Requires Mg(2+) as cofactor.

The polypeptide is Probable sulfurtransferase (Methanocaldococcus jannaschii (strain ATCC 43067 / DSM 2661 / JAL-1 / JCM 10045 / NBRC 100440) (Methanococcus jannaschii)).